A 596-amino-acid polypeptide reads, in one-letter code: Dihydroxy-acid dehydratase pbrD, mitochondrial (596 aa).

The N-terminal 18 residues, 1–18 (MATSSIRSRALGLSRRAR), are a transit peptide targeting the mitochondrion. Residue Cys-84 participates in [2Fe-2S] cluster binding. Mg(2+) is bound at residue Asp-116. Cys-157 serves as a coordination point for [2Fe-2S] cluster. Asp-158 serves as a coordination point for Mg(2+). [2Fe-2S] cluster is bound at residue Cys-230. Position 483 (Glu-483) interacts with Mg(2+). Ser-509 acts as the Proton acceptor in catalysis.

This sequence belongs to the IlvD/Edd family. [2Fe-2S] cluster is required as a cofactor. It depends on Mg(2+) as a cofactor.

The protein localises to the mitochondrion. It catalyses the reaction (2R)-2,3-dihydroxy-3-methylbutanoate = 3-methyl-2-oxobutanoate + H2O. The catalysed reaction is (2R,3R)-2,3-dihydroxy-3-methylpentanoate = (S)-3-methyl-2-oxopentanoate + H2O. It participates in amino-acid biosynthesis; L-isoleucine biosynthesis; L-isoleucine from 2-oxobutanoate: step 3/4. The protein operates within amino-acid biosynthesis; L-valine biosynthesis; L-valine from pyruvate: step 3/4. Its activity is regulated as follows. DHAD activity is not inhibited by the dihydroxyacid dehydratase inhibitor aspterric acid (AA). In terms of biological role, dihydroxyacid dehydratase; part of the gene cluster that mediates the biosynthesis of the sesquiterpenoid aspterric acid (AA), an inhibitor of dihydroxy-acid dehydratase (DHAD) effective as an herbicide. Performs the third step in the common pathway leading to biosynthesis of branched-chain amino acids. Catalyzes the dehydration of (2R,3R)-2,3-dihydroxy-3-methylpentanoate (2,3-dihydroxy-3-methylvalerate) into 2-oxo-3-methylpentanoate (2-oxo-3-methylvalerate) and of (2R)-2,3-dihydroxy-3-methylbutanoate (2,3-dihydroxyisovalerate) into 2-oxo-3-methylbutanoate (2-oxoisovalerate), the penultimate precursor to L-isoleucine and L-valine, respectively. PbrD confers self-resistance in the presence of the dihydroxyacid dehydratase inhibitor aspterric acid (AA) produced by the ast cluster. The sequence is that of Dihydroxy-acid dehydratase pbrD, mitochondrial from Penicillium brasilianum.